We begin with the raw amino-acid sequence, 318 residues long: L-lactate dehydrogenase (318 aa).

NAD(+) is bound by residues Val18, Asp39, Lys44, Tyr69, and 83 to 84 (GA). 2 residues coordinate substrate: Gln86 and Arg92. NAD(+) is bound by residues Ser105, 122 to 124 (VSN), and Ser147. Residue 124–127 (NPVD) participates in substrate binding. 152–155 (DTSR) provides a ligand contact to substrate. The active-site Proton acceptor is His179. Tyr225 is modified (phosphotyrosine). Thr234 provides a ligand contact to substrate.

Belongs to the LDH/MDH superfamily. LDH family. In terms of assembly, homotetramer.

The protein localises to the cytoplasm. It catalyses the reaction (S)-lactate + NAD(+) = pyruvate + NADH + H(+). The protein operates within fermentation; pyruvate fermentation to lactate; (S)-lactate from pyruvate: step 1/1. Functionally, catalyzes the conversion of lactate to pyruvate. The protein is L-lactate dehydrogenase of Clostridium botulinum (strain Langeland / NCTC 10281 / Type F).